Here is a 544-residue protein sequence, read N- to C-terminus: Chaperonin GroEL (544 aa).

Residues 29–32 (TLGP), 86–90 (DGTTT), Gly413, 476–478 (NAA), and Asp492 each bind ATP.

This sequence belongs to the chaperonin (HSP60) family. As to quaternary structure, forms a cylinder of 14 subunits composed of two heptameric rings stacked back-to-back. Interacts with the co-chaperonin GroES.

Its subcellular location is the cytoplasm. The catalysed reaction is ATP + H2O + a folded polypeptide = ADP + phosphate + an unfolded polypeptide.. In terms of biological role, together with its co-chaperonin GroES, plays an essential role in assisting protein folding. The GroEL-GroES system forms a nano-cage that allows encapsulation of the non-native substrate proteins and provides a physical environment optimized to promote and accelerate protein folding. This Bacillus mycoides (strain KBAB4) (Bacillus weihenstephanensis) protein is Chaperonin GroEL.